The primary structure comprises 360 residues: Dihydroorotate dehydrogenase (quinone) (360 aa).

Residues 66 to 70 (AGFDK) and T90 each bind FMN. K70 is a binding site for substrate. 115-119 (NRMGF) contributes to the substrate binding site. The FMN site is built by N143 and N176. N176 lines the substrate pocket. S179 functions as the Nucleophile in the catalytic mechanism. N181 contributes to the substrate binding site. Positions 212 and 240 each coordinate FMN. 241-242 (NT) is a binding site for substrate. Residues G264, G293, and 314-315 (YT) contribute to the FMN site.

The protein belongs to the dihydroorotate dehydrogenase family. Type 2 subfamily. In terms of assembly, monomer. The cofactor is FMN.

The protein resides in the cell membrane. It carries out the reaction (S)-dihydroorotate + a quinone = orotate + a quinol. Its pathway is pyrimidine metabolism; UMP biosynthesis via de novo pathway; orotate from (S)-dihydroorotate (quinone route): step 1/1. In terms of biological role, catalyzes the conversion of dihydroorotate to orotate with quinone as electron acceptor. The polypeptide is Dihydroorotate dehydrogenase (quinone) (Mycobacterium ulcerans (strain Agy99)).